The chain runs to 205 residues: Large ribosomal subunit protein bL25 (205 aa).

The tract at residues Phe-178–Glu-205 is disordered. Acidic residues predominate over residues Glu-182–Glu-197.

It belongs to the bacterial ribosomal protein bL25 family. CTC subfamily. In terms of assembly, part of the 50S ribosomal subunit; part of the 5S rRNA/L5/L18/L25 subcomplex. Contacts the 5S rRNA. Binds to the 5S rRNA independently of L5 and L18.

This is one of the proteins that binds to the 5S RNA in the ribosome where it forms part of the central protuberance. The protein is Large ribosomal subunit protein bL25 of Cutibacterium acnes (strain DSM 16379 / KPA171202) (Propionibacterium acnes).